Reading from the N-terminus, the 284-residue chain is Gigasin-3a (284 aa).

Residues 202–284 (GLDNPLPNPR…FKAGRKNNRN (83 aa)) form a disordered region. Residues 223 to 245 (SSPLPESTPKSSTKTSSASPIKS) show a composition bias toward low complexity. Basic residues predominate over residues 246-257 (RQGKKLRGKKQN). Residues 258-267 (KTGNTRFTYR) are compositionally biased toward polar residues. A compositionally biased stretch (basic residues) spans 268 to 284 (NNKRNIKFKAGRKNNRN).

Component of the organic matrix of calcified shell layers.

The protein is Gigasin-3a of Magallana gigas (Pacific oyster).